Consider the following 134-residue polypeptide: Small ribosomal subunit protein uS8c (134 aa).

This sequence belongs to the universal ribosomal protein uS8 family. As to quaternary structure, part of the 30S ribosomal subunit.

The protein resides in the plastid. Its subcellular location is the chloroplast. One of the primary rRNA binding proteins, it binds directly to 16S rRNA central domain where it helps coordinate assembly of the platform of the 30S subunit. This Arabidopsis thaliana (Mouse-ear cress) protein is Small ribosomal subunit protein uS8c (rps8).